The chain runs to 343 residues: CMP-N-acetylneuraminate-beta-galactosamide-alpha-2,3-sialyltransferase 1 (343 aa).

Topologically, residues 1–11 (MAPMRKKSTLK) are cytoplasmic. Residues 12-27 (LLTLLVLFIFLTSFFL) form a helical; Signal-anchor for type II membrane protein membrane-spanning segment. N-linked (GlcNAc...) asparagine glycosylation occurs at Asn-28. The Lumenal segment spans residues 28–343 (NYSHTVVTTA…INKIRIFKGR (316 aa)). 3 cysteine pairs are disulfide-bonded: Cys-62-Cys-67, Cys-64-Cys-142, and Cys-145-Cys-284. Asn-82 carries an N-linked (GlcNAc...) asparagine glycan. Gln-108 lines the substrate pocket. Asn-117 is a glycosylation site (N-linked (GlcNAc...) asparagine). Asn-150, Asn-173, Tyr-233, Tyr-269, Gly-273, Gly-293, His-302, and His-319 together coordinate substrate. Asn-326 carries N-linked (GlcNAc...) asparagine glycosylation.

This sequence belongs to the glycosyltransferase 29 family. The soluble form derives from the membrane form by proteolytic processing. The long isoform is abundant in salivary gland, liver, lung, and colon mucosa. Both long and short forms are detected in submaxillary salivary glands.

The protein resides in the golgi apparatus. The protein localises to the golgi stack membrane. It localises to the trans-Golgi network membrane. It is found in the secreted. The catalysed reaction is a beta-D-galactosyl-(1-&gt;3)-N-acetyl-alpha-D-galactosaminyl derivative + CMP-N-acetyl-beta-neuraminate = an N-acetyl-alpha-neuraminyl-(2-&gt;3)-beta-D-galactosyl-(1-&gt;3)-N-acetyl-alpha-D-galactosaminyl derivative + CMP + H(+). It carries out the reaction a ganglioside GM1 (d18:1(4E)) + CMP-N-acetyl-beta-neuraminate = a ganglioside GD1a (d18:1(4E)) + CMP + H(+). The enzyme catalyses ganglioside GM1 (d18:1(4E)/18:0) + CMP-N-acetyl-beta-neuraminate = ganglioside GD1a (18:1(4E)/18:0) + CMP + H(+). It catalyses the reaction a ganglioside GA1 (d18:1(4E)) + CMP-N-acetyl-beta-neuraminate = a ganglioside GM1b (d18:1(4E)) + CMP + H(+). The catalysed reaction is a ganglioside GD1b + CMP-N-acetyl-beta-neuraminate = a ganglioside GT1b + CMP + H(+). It carries out the reaction a 3-O-[beta-D-galactosyl-(1-&gt;3)-N-acetyl-alpha-D-galactosaminyl]-L-threonyl-[protein] + CMP-N-acetyl-beta-neuraminate = a 3-O-[N-acetyl-alpha-neuraminyl-(2-&gt;3)-beta-D-galactosyl-(1-&gt;3)-N-acetyl-alpha-D-galactosaminyl]-L-threonyl-[protein] + CMP + H(+). The enzyme catalyses a 3-O-[beta-D-galactosyl-(1-&gt;3)-N-acetyl-alpha-D-galactosaminyl]-L-seryl-[protein] + CMP-N-acetyl-beta-neuraminate = 3-O-[N-acetyl-alpha-neuraminyl-(2-&gt;3)-beta-D-galactosyl-(1-&gt;3)-N-acetyl-alpha-D-galactosaminyl]-L-seryl-[protein] + CMP + H(+). It participates in protein modification; protein glycosylation. Its pathway is glycolipid biosynthesis. Its function is as follows. A beta-galactoside alpha2-&gt;3 sialyltransferase involved in terminal sialylation of glycoproteins and glycolipids. Catalyzes the transfer of sialic acid (N-acetyl-neuraminic acid; Neu5Ac) from the nucleotide sugar donor CMP-Neu5Ac onto acceptor Galbeta-(1-&gt;3)-GalNAc-terminated glycoconjugates through an alpha2-3 linkage. Adds sialic acid to the core 1 O-glycan, Galbeta-(1-&gt;3)-GalNAc-O-Ser/Thr, which is a major structure of mucin-type O-glycans. As part of a homeostatic mechanism that regulates CD8-positive T cell numbers, sialylates core 1 O-glycans of T cell glycoproteins, SPN/CD43 and PTPRC/CD45. Prevents premature apoptosis of thymic CD8-positive T cells prior to peripheral emigration, whereas in the secondary lymphoid organs controls the survival of CD8-positive memory T cells generated following a successful immune response. Transfers sialic acid to asialofetuin, presumably onto Galbeta-(1-&gt;3)-GalNAc-O-Ser. Sialylates GM1a, GA1 and GD1b gangliosides to form GD1a, GM1b and GT1b, respectively. The sequence is that of CMP-N-acetylneuraminate-beta-galactosamide-alpha-2,3-sialyltransferase 1 (ST3GAL1) from Sus scrofa (Pig).